A 138-amino-acid chain; its full sequence is Large ribosomal subunit protein bL19 (138 aa).

It belongs to the bacterial ribosomal protein bL19 family.

Functionally, this protein is located at the 30S-50S ribosomal subunit interface and may play a role in the structure and function of the aminoacyl-tRNA binding site. This Rickettsia canadensis (strain McKiel) protein is Large ribosomal subunit protein bL19.